A 264-amino-acid polypeptide reads, in one-letter code: Triosephosphate isomerase (264 aa).

Asn-12–Lys-14 serves as a coordination point for substrate. Residue His-104 is the Electrophile of the active site. Glu-176 (proton acceptor) is an active-site residue. Residues Gly-182, Ser-222, and Gly-243 to Gly-244 contribute to the substrate site.

Belongs to the triosephosphate isomerase family. Homodimer.

The protein resides in the cytoplasm. The catalysed reaction is D-glyceraldehyde 3-phosphate = dihydroxyacetone phosphate. The protein operates within carbohydrate biosynthesis; gluconeogenesis. Its pathway is carbohydrate degradation; glycolysis; D-glyceraldehyde 3-phosphate from glycerone phosphate: step 1/1. Involved in the gluconeogenesis. Catalyzes stereospecifically the conversion of dihydroxyacetone phosphate (DHAP) to D-glyceraldehyde-3-phosphate (G3P). This is Triosephosphate isomerase from Bifidobacterium adolescentis (strain ATCC 15703 / DSM 20083 / NCTC 11814 / E194a).